The sequence spans 344 residues: Methionine import ATP-binding protein MetN 1 (344 aa).

Positions 2–241 (IEIRNLSQRF…PHHEVTRALI (240 aa)) constitute an ABC transporter domain. 38-45 (GRSGAGKS) lines the ATP pocket.

Belongs to the ABC transporter superfamily. Methionine importer (TC 3.A.1.24) family. The complex is composed of two ATP-binding proteins (MetN), two transmembrane proteins (MetI) and a solute-binding protein (MetQ).

It is found in the cell inner membrane. It carries out the reaction L-methionine(out) + ATP + H2O = L-methionine(in) + ADP + phosphate + H(+). The catalysed reaction is D-methionine(out) + ATP + H2O = D-methionine(in) + ADP + phosphate + H(+). Its function is as follows. Part of the ABC transporter complex MetNIQ involved in methionine import. Responsible for energy coupling to the transport system. In Burkholderia mallei (strain ATCC 23344), this protein is Methionine import ATP-binding protein MetN 1.